The following is a 330-amino-acid chain: MHPQQLVVSWFSLVLLASPIMAIWELEKNVYVVELDWYPDAPGETVVLTCDTPEEDGITWTSDHSSEVLGSGKTLTIQVKEFGDAGQYTCHKGGEVLSHSLLLLHKKEDGVWSTDILKKDQKEPKSKTFLKCEAKNYSGHFTCWWLTAVSTDLKFSVKSSRGSSDPRGVTCGAATLSAERVGVEHRDSWKYTVECQEGSSCPAAEESLPIELVVEAVHKLKYENYSSSFFIRDIIRPDPPKNLQLKPLKNSRHVEVSWEYPDTWSTPHSYFSLTFCVQVQGKHKREKKDKLFVDQTSAKVTCPKDASIRVQARDRYYSSSWSEWASVSCS.

Residues 1-22 form the signal peptide; it reads MHPQQLVVSWFSLVLLASPIMA. The region spanning 23 to 106 is the Ig-like C2-type domain; it reads IWELEKNVYV…LSHSLLLLHK (84 aa). Cysteine 50 and cysteine 90 form a disulfide bridge. Residues asparagine 136 and asparagine 224 are each glycosylated (N-linked (GlcNAc...) asparagine). A Fibronectin type-III domain is found at 239–330; sequence PPKNLQLKPL…WSEWASVSCS (92 aa).

The protein belongs to the IL-12B family. In terms of assembly, heterodimer with IL12A; disulfide-linked. The heterodimer is known as interleukin IL-12. Heterodimer with IL23A; disulfide-linked. The heterodimer is known as interleukin IL-23. Also secreted as a monomer. Interacts with NBR1; this interaction promotes IL-12 secretion.

Its subcellular location is the secreted. Cytokine that can act as a growth factor for activated T and NK cells, enhance the lytic activity of NK/lymphokine-activated killer cells, and stimulate the production of IFN-gamma by resting PBMC. In terms of biological role, associates with IL23A to form the IL-23 interleukin, a heterodimeric cytokine which functions in innate and adaptive immunity. IL-23 may constitute with IL-17 an acute response to infection in peripheral tissues. IL-23 binds to a heterodimeric receptor complex composed of IL12RB1 and IL23R, activates the Jak-Stat signaling cascade, stimulates memory rather than naive T-cells and promotes production of pro-inflammatory cytokines. IL-23 induces autoimmune inflammation and thus may be responsible for autoimmune inflammatory diseases and may be important for tumorigenesis. The protein is Interleukin-12 subunit beta (IL12B) of Lama glama (Llama).